The sequence spans 220 residues: Protein LURP-one-related 12 (220 aa).

This sequence belongs to the LOR family.

In terms of biological role, might be related to the phospholipid scramblase and tubby-like superfamily of membrane tethered transcription factors. In Arabidopsis thaliana (Mouse-ear cress), this protein is Protein LURP-one-related 12.